The chain runs to 72 residues: Translation initiation factor IF-1 (72 aa).

The region spanning 1-72 (MAKEDNIEMQ…SKGRIVFRSR (72 aa)) is the S1-like domain.

It belongs to the IF-1 family. In terms of assembly, component of the 30S ribosomal translation pre-initiation complex which assembles on the 30S ribosome in the order IF-2 and IF-3, IF-1 and N-formylmethionyl-tRNA(fMet); mRNA recruitment can occur at any time during PIC assembly.

The protein resides in the cytoplasm. Its function is as follows. One of the essential components for the initiation of protein synthesis. Stabilizes the binding of IF-2 and IF-3 on the 30S subunit to which N-formylmethionyl-tRNA(fMet) subsequently binds. Helps modulate mRNA selection, yielding the 30S pre-initiation complex (PIC). Upon addition of the 50S ribosomal subunit IF-1, IF-2 and IF-3 are released leaving the mature 70S translation initiation complex. This is Translation initiation factor IF-1 from Klebsiella pneumoniae subsp. pneumoniae (strain ATCC 700721 / MGH 78578).